Reading from the N-terminus, the 359-residue chain is Guanine nucleotide-binding protein G(q) subunit alpha (359 aa).

2 S-palmitoyl cysteine lipidation sites follow: Cys-9 and Cys-10. The G-alpha domain occupies Arg-38–Val-359. Positions Lys-41–Thr-54 are G1 motif. Ser-50, Gly-51, Lys-52, Ser-53, Thr-54, Ser-156, Leu-180, Arg-181, and Arg-183 together coordinate GTP. Position 53 (Ser-53) interacts with Mg(2+). The segment at Asp-178–Thr-186 is G2 motif. Position 186 (Thr-186) interacts with Mg(2+). The segment at Phe-201–Arg-210 is G3 motif. Position 209 is a 5-glutamyl histamine (Gln-209). Positions Ile-270–Asp-277 are G4 motif. GTP is bound by residues Asn-274, Lys-275, Asp-277, and Ala-331. The interval Thr-329–Thr-334 is G5 motif.

It belongs to the G-alpha family. G(q) subfamily. As to quaternary structure, g proteins are composed of 3 units; alpha, beta and gamma. The alpha chain contains the guanine nucleotide binding site. Interacts (GDP-bound form) with RIC8A (via C-terminus); promoting GNAQ folding and association with the plasma membrane. Binds NHERF1. Forms a complex with PECAM1 and BDKRB2. Interacts with GAS2L2. Post-translationally, palmitoylated by ZDHHC3 and ZDHHC7. Palmitoylation occurs in the Golgi and participates in the localization of GNAQ to the plasma membrane. In terms of processing, histaminylated at Gln-209 residues by TGM2.

Its subcellular location is the cell membrane. The protein resides in the golgi apparatus. It localises to the nucleus. It is found in the nucleus membrane. It catalyses the reaction GTP + H2O = GDP + phosphate + H(+). Its function is as follows. Guanine nucleotide-binding proteins (G proteins) function as transducers downstream of G protein-coupled receptors (GPCRs) in numerous signaling cascades. The alpha chain contains the guanine nucleotide binding site and alternates between an active, GTP-bound state and an inactive, GDP-bound state. Signaling by an activated GPCR promotes GDP release and GTP binding. The alpha subunit has a low GTPase activity that converts bound GTP to GDP, thereby terminating the signal. Both GDP release and GTP hydrolysis are modulated by numerous regulatory proteins. Signaling is mediated via phospholipase C-beta-dependent inositol lipid hydrolysis for signal propagation: activates phospholipase C-beta: following GPCR activation, GNAQ activates PLC-beta (PLCB1, PLCB2, PLCB3 or PLCB4), leading to production of diacylglycerol (DAG) and inositol 1,4,5-trisphosphate (IP3). Required for platelet activation. Regulates B-cell selection and survival and is required to prevent B-cell-dependent autoimmunity. Regulates chemotaxis of BM-derived neutrophils and dendritic cells (in vitro). Transduces FFAR4 signaling in response to long-chain fatty acids (LCFAs). Together with GNA11, required for heart development. The chain is Guanine nucleotide-binding protein G(q) subunit alpha (Gnaq) from Rattus norvegicus (Rat).